Here is a 409-residue protein sequence, read N- to C-terminus: Sulfide-quinone reductase (409 aa).

Residues 8–12 (GGRFG), 34–35 (NK), and cysteine 129 contribute to the FAD site. Cysteine 178 (cysteine persulfide intermediate) is an active-site residue. Positions 271, 307, and 317 each coordinate FAD. Cysteine 350 functions as the Cysteine persulfide intermediate in the catalytic mechanism.

This sequence belongs to the SQRD family. Monomer. Requires FAD as cofactor.

It localises to the membrane. The catalysed reaction is n a quinone + n hydrogen sulfide + n H(+) = polysulfur(n-2) + n a quinol. Its activity is regulated as follows. Inhibited by the quinone analog 2-heptyl-4-hydroxyquinolone N-oxide (HQNO). Inactivated by iodoacetamide treatment. Inhibited by KCN. Its function is as follows. Catalyzes the oxidation of sulfides, such as hydrogen sulfide, with the help of a quinone. Has the highest activity with caldariella quinone and decylubiquinone, and lower activity with naphtoquinones. Consecutive reaction cycles lead to the accumulation of a polysulfide product on the active site Cys residues; these products are released when they exceed a critical length, typically as cyclooctasulfur. The polypeptide is Sulfide-quinone reductase (Acidianus ambivalens (Desulfurolobus ambivalens)).